A 257-amino-acid chain; its full sequence is Phycoerythrobilin:ferredoxin oxidoreductase (257 aa).

It belongs to the HY2 family.

It carries out the reaction (3Z)-phycoerythrobilin + oxidized 2[4Fe-4S]-[ferredoxin] = 15,16-dihydrobiliverdin + reduced 2[4Fe-4S]-[ferredoxin] + 2 H(+). Functionally, catalyzes the two-electron reduction of the C2 and C3(1) diene system of 15,16-dihydrobiliverdin. The sequence is that of Phycoerythrobilin:ferredoxin oxidoreductase from Prochlorococcus marinus (strain MIT 9303).